The sequence spans 207 residues: Thiamine-phosphate synthase (207 aa).

Residues 36 to 40 (QLRMK) and Asn68 contribute to the 4-amino-2-methyl-5-(diphosphooxymethyl)pyrimidine site. Asp69 and Asp88 together coordinate Mg(2+). 4-amino-2-methyl-5-(diphosphooxymethyl)pyrimidine is bound at residue Ser106. Residue 132 to 134 (TNT) participates in 2-[(2R,5Z)-2-carboxy-4-methylthiazol-5(2H)-ylidene]ethyl phosphate binding. Lys135 lines the 4-amino-2-methyl-5-(diphosphooxymethyl)pyrimidine pocket. 2-[(2R,5Z)-2-carboxy-4-methylthiazol-5(2H)-ylidene]ethyl phosphate contacts are provided by residues Gly162 and 182-183 (VS).

It belongs to the thiamine-phosphate synthase family. It depends on Mg(2+) as a cofactor.

It carries out the reaction 2-[(2R,5Z)-2-carboxy-4-methylthiazol-5(2H)-ylidene]ethyl phosphate + 4-amino-2-methyl-5-(diphosphooxymethyl)pyrimidine + 2 H(+) = thiamine phosphate + CO2 + diphosphate. The catalysed reaction is 2-(2-carboxy-4-methylthiazol-5-yl)ethyl phosphate + 4-amino-2-methyl-5-(diphosphooxymethyl)pyrimidine + 2 H(+) = thiamine phosphate + CO2 + diphosphate. It catalyses the reaction 4-methyl-5-(2-phosphooxyethyl)-thiazole + 4-amino-2-methyl-5-(diphosphooxymethyl)pyrimidine + H(+) = thiamine phosphate + diphosphate. It functions in the pathway cofactor biosynthesis; thiamine diphosphate biosynthesis; thiamine phosphate from 4-amino-2-methyl-5-diphosphomethylpyrimidine and 4-methyl-5-(2-phosphoethyl)-thiazole: step 1/1. Its function is as follows. Condenses 4-methyl-5-(beta-hydroxyethyl)thiazole monophosphate (THZ-P) and 2-methyl-4-amino-5-hydroxymethyl pyrimidine pyrophosphate (HMP-PP) to form thiamine monophosphate (TMP). The sequence is that of Thiamine-phosphate synthase from Methanococcus maripaludis (strain C5 / ATCC BAA-1333).